Reading from the N-terminus, the 132-residue chain is Large-conductance mechanosensitive channel (132 aa).

3 helical membrane passes run 14-34 (VVDL…VSSL), 38-58 (IITP…LHFG), and 67-87 (GNFI…FMFI).

The protein belongs to the MscL family. In terms of assembly, homopentamer.

Its subcellular location is the cell membrane. Its function is as follows. Channel that opens in response to stretch forces in the membrane lipid bilayer. May participate in the regulation of osmotic pressure changes within the cell. The chain is Large-conductance mechanosensitive channel from Bacillus cereus (strain G9842).